The chain runs to 140 residues: Phosphatidylinositol N-acetylglucosaminyltransferase subunit GPI19 (140 aa).

Over 1-12 (MYTKEYYWFSQY) the chain is Cytoplasmic. A helical transmembrane segment spans residues 13–33 (MIITSTLVLTIIWSILPSSLG). The Lumenal segment spans residues 34–52 (EAAPKQFINTLLDIFPQRR). A helical membrane pass occupies residues 53–73 (WIITLESIMLMGMLCTYIGLL). Residues 74–140 (MYNEDTLTPP…YLYDNDHTST (67 aa)) are Cytoplasmic-facing.

Belongs to the GPI19 family. Component of the phosphatidylinositol N-acetylglucosaminyltransferase (GPI-GlcNAc transferase) complex composed of at least GPI1, GPI2, GPI3, GPI15, GPI19 and ERI1. Interacts with GPI2.

The protein resides in the endoplasmic reticulum membrane. The catalysed reaction is a 1,2-diacyl-sn-glycero-3-phospho-(1D-myo-inositol) + UDP-N-acetyl-alpha-D-glucosamine = a 6-(N-acetyl-alpha-D-glucosaminyl)-1-(1,2-diacyl-sn-glycero-3-phospho)-1D-myo-inositol + UDP + H(+). It participates in glycolipid biosynthesis; glycosylphosphatidylinositol-anchor biosynthesis. Functionally, part of the complex catalyzing the transfer of N-acetylglucosamine from UDP-N-acetylglucosamine to phosphatidylinositol, the first step of GPI biosynthesis. Involved in cell wall biosynthesis. In Saccharomyces cerevisiae (strain ATCC 204508 / S288c) (Baker's yeast), this protein is Phosphatidylinositol N-acetylglucosaminyltransferase subunit GPI19 (GPI19).